The following is a 1331-amino-acid chain: Protein bunched, class 2/F/G isoform (1331 aa).

Disordered stretches follow at residues 1–35, 101–317, 429–471, 553–582, 597–665, 681–750, 814–853, and 908–950; these read MFDR…PSRG, GATP…MSED, NGGN…TQSM, QQQQ…NNMD, QLKQ…PLTP, NFQL…AAVT, LMVP…ANNS, and QQIQ…GPND. Positions 13 to 31 are enriched in polar residues; it reads ASSNAGPGNNPVRRNSMLT. 2 stretches are compositionally biased toward low complexity: residues 106 to 165 and 175 to 190; these read TVSR…KASS and GGAA…AAAG. A compositionally biased stretch (basic residues) spans 191-212; the sequence is SHHHQPHHHHHHHHHHHQHHNH. The segment covering 236-248 has biased composition (gly residues); sequence ASAGGGGGGGSGS. Polar residues predominate over residues 263-273; the sequence is TTSSFEITSVT. Acidic residues predominate over residues 285-294; sequence TGDESADDLD. Residues 295–306 show a composition bias toward basic and acidic residues; sequence ESHTDDNSRITD. The segment covering 432 to 443 has biased composition (polar residues); sequence NNNEKTGSSTSE. 3 stretches are compositionally biased toward low complexity: residues 553–580, 614–641, and 701–734; these read QQQQ…DPNN, YANY…TGES, and VPQP…SAVT. Residues 740–750 are compositionally biased toward polar residues; that stretch reads QTSNTSNAAVT. Residues 917 to 933 show a composition bias toward polar residues; sequence PNAESETESFITASNPG. A leucine-zipper region spans residues 1194-1215; that stretch reads LKERISELMDKINKLELENSIL.

Belongs to the TSC-22/Dip/Bun family.

It localises to the cytoplasm. The protein resides in the nucleus. Its function is as follows. Probable transcription factor required for peripheral nervous system morphogenesis, eye development and oogenesis. May be required for the transmission of the dpp signal and for a morphogenetic movement of the medulla in the brain that reorients the second optic lobe relative to the first. Plays a role in determining proper dorsal cell fates leading to the formation of the dorsal appendages. This Drosophila melanogaster (Fruit fly) protein is Protein bunched, class 2/F/G isoform (bun).